Here is a 345-residue protein sequence, read N- to C-terminus: Protein RecA (345 aa).

Residue 80-87 (GPESSGKT) coordinates ATP.

This sequence belongs to the RecA family.

The protein localises to the cytoplasm. Can catalyze the hydrolysis of ATP in the presence of single-stranded DNA, the ATP-dependent uptake of single-stranded DNA by duplex DNA, and the ATP-dependent hybridization of homologous single-stranded DNAs. It interacts with LexA causing its activation and leading to its autocatalytic cleavage. This chain is Protein RecA, found in Mycoplasma mycoides subsp. mycoides SC (strain CCUG 32753 / NCTC 10114 / PG1).